The chain runs to 209 residues: LexA repressor (209 aa).

The H-T-H motif DNA-binding region spans 28–48 (RAEIAKELGFRSANAAEEHLK). Residues Ser-126 and Lys-163 each act as for autocatalytic cleavage activity in the active site.

It belongs to the peptidase S24 family. As to quaternary structure, homodimer.

The enzyme catalyses Hydrolysis of Ala-|-Gly bond in repressor LexA.. In terms of biological role, represses a number of genes involved in the response to DNA damage (SOS response), including recA and lexA. In the presence of single-stranded DNA, RecA interacts with LexA causing an autocatalytic cleavage which disrupts the DNA-binding part of LexA, leading to derepression of the SOS regulon and eventually DNA repair. This chain is LexA repressor, found in Vibrio cholerae serotype O1 (strain ATCC 39541 / Classical Ogawa 395 / O395).